Consider the following 598-residue polypeptide: Major royal jelly protein 5 (598 aa).

An N-terminal signal peptide occupies residues 1 to 17; it reads MTTWLLLVVCLGIACQG. N-linked (GlcNAc...) asparagine glycosylation is found at Asn148, Asn164, Asn181, and Asn324.

The protein belongs to the major royal jelly protein family. In terms of tissue distribution, found in and secreted from the hypopharyngeal glands of the worker honey bee (at protein level); expression peaks at 8 days post eclosion. Expressed in the brains of adult worker bees peaking at 12 days post eclosion (at protein level). Expressed in the spermatheca of adult queen bees (at protein level); Expression levels are higher in mated queens than in virgin queens. Expressed in the heads of worker bees after eclosion, expression dropping with age and detectable up to 26 days of age.

It localises to the secreted. Functionally, component of royal jelly, a substance produced in the hypopharyngeal gland containing proteins, free amino acids, fatty acids, sugars and other nutrients, which is fed to developing larvae by worker nurse bees. Major royal jelly proteins (MRJPs) are high in essential amino acids and probably have a nutritional function in larval food. All larvae are fed some royal jelly (also known as worker jelly) early in their development but it forms the principal source of nutrition for larvae destined to become queen bees. Produced in the spermatheca of adult queen bees, along with other major royal jelly proteins, where it may act as a nutrient supply for sperm stored by mated queens, or be involved in energy metabolism. The chain is Major royal jelly protein 5 from Apis mellifera (Honeybee).